The primary structure comprises 146 residues: Putative pre-16S rRNA nuclease (146 aa).

This sequence belongs to the YqgF nuclease family.

It localises to the cytoplasm. In terms of biological role, could be a nuclease involved in processing of the 5'-end of pre-16S rRNA. The sequence is that of Putative pre-16S rRNA nuclease from Paraburkholderia xenovorans (strain LB400).